A 197-amino-acid chain; its full sequence is Small ribosomal subunit protein uS7 (197 aa).

The protein belongs to the universal ribosomal protein uS7 family.

The polypeptide is Small ribosomal subunit protein uS7 (RPS5) (Cicer arietinum (Chickpea)).